We begin with the raw amino-acid sequence, 439 residues long: Type I secretion system membrane fusion protein PrsE (439 aa).

The chain crosses the membrane as a helical span at residues 20–40 (LIGVSVLALALVAGVGGWAAT).

Belongs to the membrane fusion protein (MFP) (TC 8.A.1) family. In terms of assembly, part of a type I secretion system composed of PrsD and PrsE.

It localises to the cell inner membrane. In terms of biological role, mediates secretion of glycanase ExsH. This is Type I secretion system membrane fusion protein PrsE (prsE) from Rhizobium meliloti (strain 1021) (Ensifer meliloti).